Here is a 649-residue protein sequence, read N- to C-terminus: Drebrin (649 aa).

Ala-2 is modified (N-acetylalanine). An ADF-H domain is found at 3-134; the sequence is GVSFSGHRLE…DAGAIGQRLS (132 aa). A phosphoserine mark is found at Ser-141 and Ser-142. 2 stretches are compositionally biased toward basic and acidic residues: residues 208-236 and 288-298; these read QERM…EEHR and DNPREFFKQQE. Disordered regions lie at residues 208–420, 477–502, and 538–620; these read QERM…PAED, DLWP…PSGT, and EPPA…PPPV. Phosphothreonine is present on residues Thr-331 and Thr-335. Residues 334–348 are compositionally biased toward polar residues; that stretch reads PTRSPSDSSTASTPV. Residues Ser-337, Ser-339, and Ser-345 each carry the phosphoserine modification. Thr-346 bears the Phosphothreonine mark. The segment covering 363 to 374 has biased composition (pro residues); sequence QPPPLPPPPPPA. At Ser-416 the chain carries Phosphoserine. Thr-497 carries the phosphothreonine modification. The segment covering 582–594 has biased composition (polar residues); it reads NGETTQKEGTQAS. Ser-601 carries the phosphoserine modification.

Interacts with RUFY3. Interacts with CXCR4; this interaction is enhanced by antigenic stimulation. Interacts (via ADF-H domain) with ZMYND8 (via N-terminus); the interaction leads to sequestering of ZMYND8 in the cytoplasm. In terms of tissue distribution, expressed in the brain, with expression in the molecular layer of the dentate gyrus, stratum pyramidale, and stratum radiatum of the hippocampus (at protein level). Also expressed in the terminal varicosities distributed along dendritic trees of pyramidal cells in CA4 and CA3 of the hippocampus (at protein level). Expressed in pyramidal cells in CA2, CA1 and the subiculum of the hippocampus (at protein level). Expressed in peripheral blood lymphocytes, including T-cells (at protein level). Expressed in the brain. Expressed in the heart, placenta, lung, skeletal muscle, kidney, pancreas, skin fibroblasts, gingival fibroblasts and bone-derived cells.

The protein localises to the cytoplasm. Its subcellular location is the cell projection. It is found in the dendrite. It localises to the cell cortex. The protein resides in the cell junction. The protein localises to the growth cone. In terms of biological role, actin cytoskeleton-organizing protein that plays a role in the formation of cell projections. Required for actin polymerization at immunological synapses (IS) and for the recruitment of the chemokine receptor CXCR4 to IS. Plays a role in dendritic spine morphogenesis and organization, including the localization of the dopamine receptor DRD1 to the dendritic spines. Involved in memory-related synaptic plasticity in the hippocampus. The polypeptide is Drebrin (DBN1) (Homo sapiens (Human)).